We begin with the raw amino-acid sequence, 301 residues long: Nucleotide-binding protein ELI_02120 (301 aa).

Position 12–19 (12–19 (GMSGAGKS)) interacts with ATP. Position 62–65 (62–65 (DSRT)) interacts with GTP.

The protein belongs to the RapZ-like family.

Functionally, displays ATPase and GTPase activities. This chain is Nucleotide-binding protein ELI_02120, found in Erythrobacter litoralis (strain HTCC2594).